Reading from the N-terminus, the 390-residue chain is 2-deoxy-scyllo-inosose synthase (390 aa).

Residues Asp42, 73–76, 105–109, 129–130, 140–142, and 151–152 each bind NAD(+); these read EQNK, GVTGN, TT, SLK, and KN. Lys142 is an active-site residue. Glu184 contacts Co(2+). The active site involves Glu244. Positions 247 and 263 each coordinate Co(2+). The disordered stretch occupies residues 371–390; that stretch reads PPRPAAARTDDAATVLGGAG.

Belongs to the sugar phosphate cyclases superfamily. DOI synthase family. The cofactor is NAD(+). Co(2+) serves as cofactor.

The enzyme catalyses D-glucose 6-phosphate = 2-deoxy-L-scyllo-inosose + phosphate. It participates in metabolic intermediate biosynthesis; 2-deoxystreptamine biosynthesis; 2-deoxystreptamine from D-glucose 6-phosphate: step 1/4. It functions in the pathway antibiotic biosynthesis; kanamycin biosynthesis. In terms of biological role, catalyzes the intramolecular carbocycle formation from D-glucose-6-phosphate to 2-deoxy-scyllo-inosose (DOI). The sequence is that of 2-deoxy-scyllo-inosose synthase (kanC) from Streptomyces kanamyceticus.